A 218-amino-acid polypeptide reads, in one-letter code: Probable transaldolase (218 aa).

Residue Lys-87 is the Schiff-base intermediate with substrate of the active site.

This sequence belongs to the transaldolase family. Type 3B subfamily.

The protein localises to the cytoplasm. It catalyses the reaction D-sedoheptulose 7-phosphate + D-glyceraldehyde 3-phosphate = D-erythrose 4-phosphate + beta-D-fructose 6-phosphate. The protein operates within carbohydrate degradation; pentose phosphate pathway; D-glyceraldehyde 3-phosphate and beta-D-fructose 6-phosphate from D-ribose 5-phosphate and D-xylulose 5-phosphate (non-oxidative stage): step 2/3. Transaldolase is important for the balance of metabolites in the pentose-phosphate pathway. This is Probable transaldolase from Bacteroides thetaiotaomicron (strain ATCC 29148 / DSM 2079 / JCM 5827 / CCUG 10774 / NCTC 10582 / VPI-5482 / E50).